A 340-amino-acid polypeptide reads, in one-letter code: Uroporphyrinogen decarboxylase (340 aa).

Residues 21–25 (RQAGR), Asp-71, Tyr-147, Ser-202, and His-315 each bind substrate.

Belongs to the uroporphyrinogen decarboxylase family. Homodimer.

It localises to the cytoplasm. The enzyme catalyses uroporphyrinogen III + 4 H(+) = coproporphyrinogen III + 4 CO2. Its pathway is porphyrin-containing compound metabolism; protoporphyrin-IX biosynthesis; coproporphyrinogen-III from 5-aminolevulinate: step 4/4. In terms of biological role, catalyzes the decarboxylation of four acetate groups of uroporphyrinogen-III to yield coproporphyrinogen-III. The polypeptide is Uroporphyrinogen decarboxylase (Nautilia profundicola (strain ATCC BAA-1463 / DSM 18972 / AmH)).